The sequence spans 370 residues: Asporin (370 aa).

An N-terminal signal peptide occupies residues 1–15 (MKVYVLLVFLTLCSA). Ser45 carries O-linked (GalNAc...) serine glycosylation. The LRRNT domain occupies 56–92 (FFPFDLFSTCPFGCQCYSRVVHCSDLGLSSVPSNIPF). Disulfide bonds link Cys65–Cys71 and Cys69–Cys78. LRR repeat units lie at residues 93 to 114 (DTRM…DFKG), 117 to 138 (SLYA…AFLT), 141 to 163 (KLRR…PKSL), 164 to 183 (AELR…TFKG), 186 to 209 (ALHV…AFEG), 232 to 253 (TLLE…DFKR), 256 to 277 (DLQR…SLAN), 280 to 302 (RVRE…QELK), 303 to 324 (YLQI…DFCP), 332 to 354 (SLYS…PATF), and 355 to 370 (RCVL…NFRK). Residue Asn272 is glycosylated (N-linked (GlcNAc...) asparagine). Cys323 and Cys356 are oxidised to a cystine.

The protein belongs to the small leucine-rich proteoglycan (SLRP) family. SLRP class I subfamily.

It localises to the secreted. The protein localises to the extracellular space. Its subcellular location is the extracellular matrix. The sequence is that of Asporin (ASPN) from Bos taurus (Bovine).